Consider the following 217-residue polypeptide: Small ribosomal subunit protein uS3 (217 aa).

In terms of domain architecture, KH type-2 spans I38–K106.

It belongs to the universal ribosomal protein uS3 family. Part of the 30S ribosomal subunit. Forms a tight complex with proteins S10 and S14.

Its function is as follows. Binds the lower part of the 30S subunit head. Binds mRNA in the 70S ribosome, positioning it for translation. In Streptococcus gordonii (strain Challis / ATCC 35105 / BCRC 15272 / CH1 / DL1 / V288), this protein is Small ribosomal subunit protein uS3.